The following is a 739-amino-acid chain: Catalase-peroxidase 2 (739 aa).

An N-terminal signal peptide occupies residues methionine 1 to alanine 26. Residues tryptophan 105–tyrosine 227 constitute a cross-link (tryptophyl-tyrosyl-methioninium (Trp-Tyr) (with M-253)). The active-site Proton acceptor is histidine 106. The segment at residues tyrosine 227–methionine 253 is a cross-link (tryptophyl-tyrosyl-methioninium (Tyr-Met) (with W-105)). Histidine 268 provides a ligand contact to heme b.

Belongs to the peroxidase family. Peroxidase/catalase subfamily. Homodimer or homotetramer. It depends on heme b as a cofactor. Formation of the three residue Trp-Tyr-Met cross-link is important for the catalase, but not the peroxidase activity of the enzyme.

It carries out the reaction H2O2 + AH2 = A + 2 H2O. The enzyme catalyses 2 H2O2 = O2 + 2 H2O. Functionally, bifunctional enzyme with both catalase and broad-spectrum peroxidase activity. The sequence is that of Catalase-peroxidase 2 from Shewanella sp. (strain MR-4).